The chain runs to 153 residues: MFGISFSELLLVGLVALLVLGPERLPGAARTAGLWIGRLKRSFNAIKQEVEREIGADEIRRQLHNEHIISLEDEARKMFAQNQHPETTYEPVSPQPASVQPDAANTGHNTLGPAEPAAPKPALSLEKTAKPVDADTPVPTPPVHDSSLPPRAP.

The chain crosses the membrane as a helical span at residues 1-21 (MFGISFSELLLVGLVALLVLG). The disordered stretch occupies residues 78–153 (MFAQNQHPET…HDSSLPPRAP (76 aa)).

Belongs to the TatB family. As to quaternary structure, the Tat system comprises two distinct complexes: a TatABC complex, containing multiple copies of TatA, TatB and TatC subunits, and a separate TatA complex, containing only TatA subunits. Substrates initially bind to the TatABC complex, which probably triggers association of the separate TatA complex to form the active translocon.

Its subcellular location is the cell inner membrane. Functionally, part of the twin-arginine translocation (Tat) system that transports large folded proteins containing a characteristic twin-arginine motif in their signal peptide across membranes. Together with TatC, TatB is part of a receptor directly interacting with Tat signal peptides. TatB may form an oligomeric binding site that transiently accommodates folded Tat precursor proteins before their translocation. The chain is Sec-independent protein translocase protein TatB from Pseudomonas savastanoi pv. phaseolicola (strain 1448A / Race 6) (Pseudomonas syringae pv. phaseolicola (strain 1448A / Race 6)).